The primary structure comprises 633 residues: tRNA uridine 5-carboxymethylaminomethyl modification enzyme MnmG (633 aa).

G18–G23 serves as a coordination point for FAD. The disordered stretch occupies residues P208 to F232. Over residues D216–P229 the composition is skewed to basic and acidic residues. G279 to F293 lines the NAD(+) pocket.

It belongs to the MnmG family. Homodimer. Heterotetramer of two MnmE and two MnmG subunits. The cofactor is FAD.

The protein localises to the cytoplasm. In terms of biological role, NAD-binding protein involved in the addition of a carboxymethylaminomethyl (cmnm) group at the wobble position (U34) of certain tRNAs, forming tRNA-cmnm(5)s(2)U34. In Lacticaseibacillus paracasei (strain ATCC 334 / BCRC 17002 / CCUG 31169 / CIP 107868 / KCTC 3260 / NRRL B-441) (Lactobacillus paracasei), this protein is tRNA uridine 5-carboxymethylaminomethyl modification enzyme MnmG.